The primary structure comprises 215 residues: MTWKDIIENEQQKPYYGKLKEEIDKRYENSIVFPEKQNIFKAFSLTKFEDLKVVILGQDPYHGIGQAQGLSFSTPSNIKNPPSMVNILKEINDDLGKKSVCEDGDLTPWAKQGIMLLNTILTVEQGLAKSHHNLGWEIFTDNIIKYISDNKENVIFLLWGSPAISKTKLIDKNKHFILTAPHPSPLSVYRGFYGCKHFSKTNEILKKLNKEEIIW.

Asp59 serves as the catalytic Proton acceptor.

Belongs to the uracil-DNA glycosylase (UDG) superfamily. UNG family.

The protein resides in the cytoplasm. The enzyme catalyses Hydrolyzes single-stranded DNA or mismatched double-stranded DNA and polynucleotides, releasing free uracil.. Excises uracil residues from the DNA which can arise as a result of misincorporation of dUMP residues by DNA polymerase or due to deamination of cytosine. The chain is Uracil-DNA glycosylase from Aliarcobacter butzleri (strain RM4018) (Arcobacter butzleri).